We begin with the raw amino-acid sequence, 589 residues long: V-type ATP synthase alpha chain 1 (589 aa).

239–246 (GPFGAGKT) serves as a coordination point for ATP.

The protein belongs to the ATPase alpha/beta chains family.

It carries out the reaction ATP + H2O + 4 H(+)(in) = ADP + phosphate + 5 H(+)(out). In terms of biological role, produces ATP from ADP in the presence of a proton gradient across the membrane. The V-type alpha chain is a catalytic subunit. The protein is V-type ATP synthase alpha chain 1 (atpA1) of Treponema pallidum (strain Nichols).